We begin with the raw amino-acid sequence, 413 residues long: Serine/threonine-protein kinase SSN3 (413 aa).

A Protein kinase domain is found at tyrosine 26–phenylalanine 355. Residues isoleucine 32–valine 40 and lysine 56 each bind ATP. Aspartate 158 (proton acceptor) is an active-site residue. Residues arginine 376–isoleucine 385 are compositionally biased toward basic and acidic residues. Residues arginine 376–glutamate 413 are disordered.

It belongs to the protein kinase superfamily. CMGC Ser/Thr protein kinase family. CDC2/CDKX subfamily. Component of the srb8-11 complex, a regulatory module of the Mediator complex. The cofactor is Mg(2+).

The protein localises to the nucleus. It catalyses the reaction L-seryl-[protein] + ATP = O-phospho-L-seryl-[protein] + ADP + H(+). It carries out the reaction L-threonyl-[protein] + ATP = O-phospho-L-threonyl-[protein] + ADP + H(+). The enzyme catalyses [DNA-directed RNA polymerase] + ATP = phospho-[DNA-directed RNA polymerase] + ADP + H(+). In terms of biological role, component of the srb8-11 complex. The srb8-11 complex is a regulatory module of the Mediator complex which is itself involved in regulation of basal and activated RNA polymerase II-dependent transcription. The srb8-11 complex may be involved in the transcriptional repression of a subset of genes regulated by Mediator. It may inhibit the association of the Mediator complex with RNA polymerase II to form the holoenzyme complex. The srb8-11 complex phosphorylates the C-terminal domain (CTD) of the largest subunit of RNA polymerase II. The polypeptide is Serine/threonine-protein kinase SSN3 (ssn3) (Aspergillus oryzae (strain ATCC 42149 / RIB 40) (Yellow koji mold)).